Here is a 205-residue protein sequence, read N- to C-terminus: MMAPFASLASGILLLLSLIASSKACSCAPPHPQTAFCNSDLVIRAKFMGSPEINETTLYQRYKIKMTKMLKGFKAVGNAADIRYAYTPVMESLCGYAHKSQNRSEEFLITGRLRNGNLHISACSFLVPWRTLSPAQQRAFSKTYSAGCGVCTVFPCLSIPCKLESDTHCLWTDQVLVGSEDYQSRHFACLPRNPGLCTWRSLGAR.

A signal peptide spans 1–24 (MMAPFASLASGILLLLSLIASSKA). Residue C25 participates in Zn(2+) binding. The tract at residues 25–28 (CSCA) is involved in metalloproteinase-binding. Cystine bridges form between C25–C94, C27–C123, C37–C148, C151–C197, C156–C161, and C169–C189. In terms of domain architecture, NTR spans 25 to 148 (CSCAPPHPQT…AFSKTYSAGC (124 aa)). N54 carries N-linked (GlcNAc...) asparagine glycosylation. Residues 91-92 (ES) are involved in metalloproteinase-binding. N102 carries N-linked (GlcNAc...) asparagine glycosylation. Residue S179 is modified to Phosphoserine.

Belongs to the protease inhibitor I35 (TIMP) family. In terms of assembly, interacts with MMP1, MMP3, MMP10 and MMP13, but has only very low affinity for MMP14. Interacts with CD63; identified in a complex with CD63 and ITGB1. Post-translationally, the activity of TIMP1 is dependent on the presence of disulfide bonds. N-glycosylated. In terms of tissue distribution, found in fetal and adult tissues. Highest levels are found in bone. Also found in lung, ovary and uterus.

It localises to the secreted. Its function is as follows. Metalloproteinase inhibitor that functions by forming one to one complexes with target metalloproteinases, such as collagenases, and irreversibly inactivates them by binding to their catalytic zinc cofactor. Acts on MMP1, MMP2, MMP3, MMP7, MMP8, MMP9, MMP10, MMP11, MMP12, MMP13 and MMP16. Does not act on MMP14. Also functions as a growth factor that regulates cell differentiation, migration and cell death and activates cellular signaling cascades via CD63 and ITGB1. Plays a role in integrin signaling. In Mus musculus (Mouse), this protein is Metalloproteinase inhibitor 1 (Timp1).